The sequence spans 1456 residues: Putative 1-phosphatidylinositol-3-phosphate 5-kinase FAB1D (1456 aa).

Low complexity predominate over residues Met1 to Ser19. 6 disordered regions span residues Met1–Gly110, Pro533–Glu592, Glu925–Val944, Val967–Ile987, Asn1003–Val1022, and Asn1137–Leu1159. Residues Glu43–Ser57 are compositionally biased toward basic and acidic residues. Residues Arg86–Gly110 are compositionally biased toward acidic residues. The segment covering Pro533–Ser544 has biased composition (low complexity). The span at Ser973–Ile987 shows a compositional bias: polar residues. The PIPK domain maps to Asn1115–Phe1443. Over residues Arg1150 to Leu1159 the composition is skewed to polar residues.

Component of the PI(3,5)P2 regulatory complex at least composed of ATG18, SAC/FIG4, FAB1 and VAC14. Mg(2+) serves as cofactor. It depends on Mn(2+) as a cofactor.

The catalysed reaction is a 1,2-diacyl-sn-glycero-3-phospho-(1D-myo-inositol-3-phosphate) + ATP = a 1,2-diacyl-sn-glycero-3-phospho-(1D-myo-inositol-3,5-bisphosphate) + ADP + H(+). Its function is as follows. The PI(3,5)P2 regulatory complex regulates both the synthesis and turnover of phosphatidylinositol 3,5-bisphosphate (PtdIns(3,5)P2). Catalyzes the phosphorylation of phosphatidylinositol 3-phosphate on the fifth hydroxyl of the myo-inositol ring, to form phosphatidylinositol 3,5-bisphosphate. This is Putative 1-phosphatidylinositol-3-phosphate 5-kinase FAB1D (FAB1D) from Arabidopsis thaliana (Mouse-ear cress).